A 218-amino-acid polypeptide reads, in one-letter code: Nucleoid occlusion factor SlmA (218 aa).

The region spanning 30–90 is the HTH tetR-type domain; it reads ERRQQVLTVL…ALIEHIESTL (61 aa). Residues 53 to 72 constitute a DNA-binding region (H-T-H motif); it reads TTARLAKEVGVSEAALYRYF.

This sequence belongs to the nucleoid occlusion factor SlmA family. As to quaternary structure, homodimer. Interacts with FtsZ.

The protein localises to the cytoplasm. The protein resides in the nucleoid. In terms of biological role, required for nucleoid occlusion (NO) phenomenon, which prevents Z-ring formation and cell division over the nucleoid. Acts as a DNA-associated cell division inhibitor that binds simultaneously chromosomal DNA and FtsZ, and disrupts the assembly of FtsZ polymers. SlmA-DNA-binding sequences (SBS) are dispersed on non-Ter regions of the chromosome, preventing FtsZ polymerization at these regions. The sequence is that of Nucleoid occlusion factor SlmA from Haemophilus influenzae (strain PittGG).